We begin with the raw amino-acid sequence, 426 residues long: Glutamate-1-semialdehyde 2,1-aminomutase (426 aa).

An N6-(pyridoxal phosphate)lysine modification is found at Lys265.

This sequence belongs to the class-III pyridoxal-phosphate-dependent aminotransferase family. HemL subfamily. In terms of assembly, homodimer. Pyridoxal 5'-phosphate serves as cofactor.

Its subcellular location is the cytoplasm. It carries out the reaction (S)-4-amino-5-oxopentanoate = 5-aminolevulinate. It participates in porphyrin-containing compound metabolism; protoporphyrin-IX biosynthesis; 5-aminolevulinate from L-glutamyl-tRNA(Glu): step 2/2. The protein is Glutamate-1-semialdehyde 2,1-aminomutase of Neisseria gonorrhoeae (strain NCCP11945).